The following is a 108-amino-acid chain: NADH dehydrogenase [ubiquinone] flavoprotein 3, mitochondrial (108 aa).

The N-terminal 35 residues, 1 to 35 (MAVSLLLRGGRIRALKAALLEAKVFRGELASTVPL), are a transit peptide targeting the mitochondrion. The interval 32 to 67 (TVPLSTESENNKKAAGPTSKTESVFKEPTLVPESSD) is disordered. At Ser105 the chain carries Phosphoserine.

Belongs to the complex I NDUFV3 subunit family. Complex I is composed of 45 different subunits. This is a component of the flavoprotein-sulfur (FP) fragment of the enzyme.

It is found in the mitochondrion inner membrane. Accessory subunit of the mitochondrial membrane respiratory chain NADH dehydrogenase (Complex I), that is believed not to be involved in catalysis. Complex I functions in the transfer of electrons from NADH to the respiratory chain. The immediate electron acceptor for the enzyme is believed to be ubiquinone. May be the terminally assembled subunit of Complex I. The protein is NADH dehydrogenase [ubiquinone] flavoprotein 3, mitochondrial (Ndufv3) of Rattus norvegicus (Rat).